The following is a 478-amino-acid chain: tRNA(Ile)-lysidine synthase (478 aa).

Residue 27 to 32 (SGGSDS) participates in ATP binding.

It belongs to the tRNA(Ile)-lysidine synthase family.

The protein localises to the cytoplasm. It carries out the reaction cytidine(34) in tRNA(Ile2) + L-lysine + ATP = lysidine(34) in tRNA(Ile2) + AMP + diphosphate + H(+). Its function is as follows. Ligates lysine onto the cytidine present at position 34 of the AUA codon-specific tRNA(Ile) that contains the anticodon CAU, in an ATP-dependent manner. Cytidine is converted to lysidine, thus changing the amino acid specificity of the tRNA from methionine to isoleucine. The protein is tRNA(Ile)-lysidine synthase of Rickettsia conorii (strain ATCC VR-613 / Malish 7).